A 212-amino-acid polypeptide reads, in one-letter code: External core antigen (212 aa).

The N-terminal stretch at 1-19 is a signal peptide; the sequence is MQLFHLCLIISCSCPTVQA. The HBEAG stretch occupies residues 25–27; sequence GWL. The disordered stretch occupies residues 165–212; sequence NAPILSTLPETTVVRRRGRSPRRRTPSPRRRRSQSPRRRRSQSRESQC. A compositionally biased stretch (basic residues) spans 178-205; the sequence is VRRRGRSPRRRTPSPRRRRSQSPRRRRS. A 1; half-length repeat occupies 184 to 190; it reads SPRRRTP. Positions 184 to 206 are 3 X 8 AA repeats of S-P-R-R-R-R-S-Q; sequence SPRRRTPSPRRRRSQSPRRRRSQ. A propeptide spanning residues 184–212 is cleaved from the precursor; that stretch reads SPRRRTPSPRRRRSQSPRRRRSQSRESQC. Tandem repeats lie at residues 191–198 and 199–206.

The protein belongs to the orthohepadnavirus precore antigen family. Homodimerizes. Post-translationally, phosphorylated. In terms of processing, cleaved by host furin.

The protein resides in the secreted. It localises to the host nucleus. May regulate immune response to the intracellular capsid in acting as a T-cell tolerogen, by having an immunoregulatory effect which prevents destruction of infected cells by cytotoxic T-cells. This immune regulation may predispose to chronicity during perinatal infections and prevent severe liver injury during adult infections. The protein is External core antigen of Homo sapiens (Human).